We begin with the raw amino-acid sequence, 349 residues long: MSQHATKKRKLDRSTEDYMYFDSYSDVTIHEEMIADTVRTNTYRMGIFKNSKSIEGKVVLDVGAGTGVLSLFCAQAGARKVYAVEASSIADQAVKIVKLNQMEDRIEVIKSTLETIELAEKVDVIVSEWMGYALLHESMLNSVIFARDKWLKPGGLILPSRADLYIAPINDVVVEGRLDFWSTVKGQYGVDMSCMTDFARKCIMNKDITVNPVTVEDVLSHPCKFAELDLNTVTLEQLRDVNGSFSCVCFGSSSIHAFCVWFTVTFPAEEKALVLSTSPFKAETHWKQAVLYLDDAVDVMQDTKVEGEISLYPSEENSRHICIRVDYVIGEQKKHSKSFSIPDQYLEVK.

The SAM-dependent MTase PRMT-type domain occupies 17–324 (DYMYFDSYSD…EENSRHICIR (308 aa)). The S-adenosyl-L-methionine site is built by His-30, Arg-39, Gly-63, Glu-85, and Glu-114. Active-site residues include Glu-128 and Glu-137.

The protein belongs to the class I-like SAM-binding methyltransferase superfamily. Protein arginine N-methyltransferase family. PRMT6 subfamily.

Its subcellular location is the nucleus. The catalysed reaction is L-arginyl-[protein] + 2 S-adenosyl-L-methionine = N(omega),N(omega)-dimethyl-L-arginyl-[protein] + 2 S-adenosyl-L-homocysteine + 2 H(+). Functionally, arginine methyltransferase that can catalyze the formation of both omega-N monomethylarginine (MMA) and asymmetrical dimethylarginine (aDMA), with a strong preference for the formation of aDMA. Preferentially methylates arginyl residues present in a glycine and arginine-rich domain and displays preference for monomethylated substrates. Specifically mediates the asymmetric dimethylation of histone H3 'Arg-2' to form H3R2me2a. H3R2me2a represents a specific tag for epigenetic transcriptional repression and is mutually exclusive with methylation on histone H3 'Lys-4' (H3K4me2 and H3K4me3). Acts as a transcriptional repressor of various genes such as HOXA2, THBS1 and TP53. Repression of TP53 blocks cellular senescence. Also methylates histone H2A and H4 'Arg-3' (H2AR3me and H4R3me, respectively). Acts as a regulator of DNA base excision during DNA repair by mediating the methylation of DNA polymerase beta (POLB), leading to the stimulation of its polymerase activity by enhancing DNA binding and processivity. Methylates HMGA1. Regulates alternative splicing events. Acts as a transcriptional coactivator of a number of steroid hormone receptors including ESR1, ESR2, PGR and NR3C1. This is Protein arginine N-methyltransferase 6 (prmt6) from Danio rerio (Zebrafish).